The primary structure comprises 747 residues: Threonine synthase-like 1 (747 aa).

Lysine 351 carries the post-translational modification N6-(pyridoxal phosphate)lysine.

It belongs to the threonine synthase family. Pyridoxal 5'-phosphate is required as a cofactor.

The sequence is that of Threonine synthase-like 1 (Thnsl1) from Mus musculus (Mouse).